Consider the following 462-residue polypeptide: Light-independent protochlorophyllide reductase subunit N (462 aa).

3 residues coordinate [4Fe-4S] cluster: cysteine 24, cysteine 49, and cysteine 109.

Belongs to the BchN/ChlN family. Protochlorophyllide reductase is composed of three subunits; ChlL, ChlN and ChlB. Forms a heterotetramer of two ChlB and two ChlN subunits. It depends on [4Fe-4S] cluster as a cofactor.

It is found in the plastid. Its subcellular location is the chloroplast. It carries out the reaction chlorophyllide a + oxidized 2[4Fe-4S]-[ferredoxin] + 2 ADP + 2 phosphate = protochlorophyllide a + reduced 2[4Fe-4S]-[ferredoxin] + 2 ATP + 2 H2O. Its pathway is porphyrin-containing compound metabolism; chlorophyll biosynthesis (light-independent). Its function is as follows. Component of the dark-operative protochlorophyllide reductase (DPOR) that uses Mg-ATP and reduced ferredoxin to reduce ring D of protochlorophyllide (Pchlide) to form chlorophyllide a (Chlide). This reaction is light-independent. The NB-protein (ChlN-ChlB) is the catalytic component of the complex. In Pleurastrum terricola (Filamentous green alga), this protein is Light-independent protochlorophyllide reductase subunit N.